We begin with the raw amino-acid sequence, 179 residues long: Shikimate kinase (179 aa).

15 to 20 (GAGKTS) serves as a coordination point for ATP. T19 lines the Mg(2+) pocket. D37, R61, and G83 together coordinate substrate. R122 provides a ligand contact to ATP. Residue R142 participates in substrate binding.

It belongs to the shikimate kinase family. Monomer. Mg(2+) is required as a cofactor.

The protein localises to the cytoplasm. It carries out the reaction shikimate + ATP = 3-phosphoshikimate + ADP + H(+). It participates in metabolic intermediate biosynthesis; chorismate biosynthesis; chorismate from D-erythrose 4-phosphate and phosphoenolpyruvate: step 5/7. Catalyzes the specific phosphorylation of the 3-hydroxyl group of shikimic acid using ATP as a cosubstrate. This Coxiella burnetii (strain RSA 331 / Henzerling II) protein is Shikimate kinase.